A 292-amino-acid chain; its full sequence is G1/S-specific cyclin-D3 (292 aa).

Positions 27-152 (VLQSLLRLEE…LVLGKLKWDL (126 aa)) constitute a Cyclin N-terminal domain. Residues 256–292 (REAAQTAPSPVPKAPRGSSSQGPSQTSTPTDVTAIHL) are disordered. Phosphoserine is present on residues Ser-264 and Ser-279. Residues 272-285 (GSSSQGPSQTSTPT) show a composition bias toward low complexity. Thr-283 is modified (phosphothreonine).

This sequence belongs to the cyclin family. Cyclin D subfamily. As to quaternary structure, interacts with the CDK4 and CDK6 protein kinases to form a serine/threonine kinase holoenzyme complex. The cyclin subunit imparts substrate specificity to the complex. Interacts with ATF5. Interacts with EIF3K. Component of the ternary complex cyclin D/CDK4/CDKN1B required for nuclear translocation and modulation of CDK4-mediated kinase activity. Can form similar complexes with either CDKN1A or CDKN2A. Phosphorylation at Thr-283 by MAP kinases is required for ubiquitination and degradation by the DCX(AMBRA1) complex. In terms of processing, ubiquitinated by the DCX(AMBRA1) complex during the transition from G1 to S cell phase, leading to its degradation: ubiquitination is dependent on Thr-283 phosphorylation. The DCX(AMBRA1) complex represents the major regulator of CCND3 stability during the G1/S transition. Polyubiquitinated by the SCF(FBXL2) complex, leading to proteasomal degradation.

The protein localises to the nucleus. It localises to the cytoplasm. Functionally, regulatory component of the cyclin D3-CDK4 (DC) complex that phosphorylates and inhibits members of the retinoblastoma (RB) protein family including RB1 and regulates the cell-cycle during G(1)/S transition. Phosphorylation of RB1 allows dissociation of the transcription factor E2F from the RB/E2F complex and the subsequent transcription of E2F target genes which are responsible for the progression through the G(1) phase. Hypophosphorylates RB1 in early G(1) phase. Cyclin D-CDK4 complexes are major integrators of various mitogenenic and antimitogenic signals. Component of the ternary complex, cyclin D3/CDK4/CDKN1B, required for nuclear translocation and activity of the cyclin D-CDK4 complex. Shows transcriptional coactivator activity with ATF5 independently of CDK4. The polypeptide is G1/S-specific cyclin-D3 (Mus musculus (Mouse)).